Here is a 74-residue protein sequence, read N- to C-terminus: Coleoptericin (74 aa).

Positions 1 to 74 are disordered; it reads SLQGGAPNFP…TWHVGGTYRR (74 aa).

It belongs to the coleoptericin family.

Its subcellular location is the secreted. Functionally, responsible for the anti Gram-negative activity of immune hemolymph of Z.atratus. The polypeptide is Coleoptericin (Zophobas atratus (Giant mealworm beetle)).